Here is a 622-residue protein sequence, read N- to C-terminus: Low affinity potassium transport system protein Kup (622 aa).

12 consecutive transmembrane segments (helical) span residues 9–29 (LSAVTLAAIGVVYGDIGTSPL), 46–66 (PDVVFGFLSLIFWMLILVVSV), 101–121 (ILVVLGLIGGSFFYGEVVITP), 137–157 (PALDPYIVPCSIAVLTLLFVI), 165–185 (VGKLFAPVMLVWFLTLALLGL), 213–233 (VSFFALGAVVLAITGVEALYA), 247–267 (WFTVVLPSLVLNYFGQGALLL), 276–296 (PFFLLAPDWALIPLLILATLA), 337–357 (IYIPVINWTLYLAVVLVIIGF), 363–383 (LAAAYGIAVTGTMVITSILFC), 395–415 (FLVVFLLMVLLIIDIPMFSAN), and 416–436 (VLKLFSGGWLPLSLGLVMFII).

The protein belongs to the HAK/KUP transporter (TC 2.A.72) family.

Its subcellular location is the cell inner membrane. It carries out the reaction K(+)(in) + H(+)(in) = K(+)(out) + H(+)(out). Its function is as follows. Responsible for the low-affinity transport of potassium into the cell. Likely operates as a K(+):H(+) symporter. This is Low affinity potassium transport system protein Kup from Yersinia pestis (strain Pestoides F).